A 699-amino-acid chain; its full sequence is MAAPAARADGSDAALAAALADVPDLGRLLEVDPYLKPYAPDFQRRYNRFSQTLDNIGKNEGGIDKFSRGYESFGVHRCADGGLYCKEWAPGAEGVFLTGDFNDWNPFSYPYKKLDYGKWDLYIPPKPNKSLLVPHGSKLKVVIRSKSGEILYRISPWAKYVVRESGNVNYDWIHWDPEQPYKFKHSRPKKPRSLRIYESHVGISSHEGKIASYKHFTCNVLPRIKGLGYNCIQMMAIMEHAYYASFGYQITSFFAASSRYGTPEELKELVDTAHSMGITVLLDVVHSHASKNSEDGLNMFDGTDSCYFHSGPRGTHDLWDSRLFIYSSWEVLRFLLSNIRWWLEEYGFDGFRFDGVTSMLYHHHGIGASFSGDYHEYFGLQVDEDALTYLMLANHLVHTLYPDSITIAEDVSGMPALCSPISQGGGGFDYRLAMAIPDKWIQLVKEFKDEDWNMGNIVYTLTNRRHLEKCIAYAESHDQALVGDKSLAFWLMDAEMYTNMSVLTPFTPVIDRGIQLHKMIRLITHALGGEGYLNFMGNEFGHPEWLDFPRKGNNESYHYARRQFHLTDDDLLRYKFLNNFDRDMNKLEERCGWLSAPQAFVSEKHEGNKVIAFERAALLFIFNFHPSKSYTNYRVGTTLPGKFKIVLDSDAAEYGGHQRLDHNTDFFSEPYEHNERPSSLLVYIPSRVALILQNVDPPN.

Residues 59–60 (NE) and 88–90 (WAP) each bind substrate. Trp104 provides a ligand contact to (1,4-alpha-D-glucosyl)n. 115–118 (DYGK) is a binding site for substrate. Lys140 contacts (1,4-alpha-D-glucosyl)n. Tyr170 carries the post-translational modification Phosphotyrosine. 330-333 (EVLR) contributes to the substrate binding site. The active-site Nucleophile is the Asp354. Glu409 serves as the catalytic Proton donor.

Belongs to the glycosyl hydrolase 13 family. GlgB subfamily. As to quaternary structure, monomer.

The catalysed reaction is Transfers a segment of a (1-&gt;4)-alpha-D-glucan chain to a primary hydroxy group in a similar glucan chain.. It functions in the pathway glycan biosynthesis; glycogen biosynthesis. Functionally, glycogen-branching enzyme participates in the glycogen biosynthetic process along with glycogenin and glycogen synthase. Generates alpha-1,6-glucosidic branches from alpha-1,4-linked glucose chains, to increase solubility of the glycogen polymer. The sequence is that of 1,4-alpha-glucan-branching enzyme (GBE1) from Equus caballus (Horse).